The chain runs to 203 residues: Cutinase pbc1 (203 aa).

The N-terminal stretch at 1 to 18 is a signal peptide; the sequence is MKVTALGNTLTGFGQALA. A disulfide bridge connects residues C32 and C107. S118 acts as the Nucleophile in catalysis. A disulfide bridge links C166 with C173. Residue H170 is part of the active site. H183 serves as the catalytic Proton donor/acceptor.

The protein belongs to the cutinase family. The 2 disulfide bonds play a critical role in holding the catalytic residues in juxta-position; reduction of the disulfide bridges results in the complete inactivation of the enzyme.

It is found in the secreted. The catalysed reaction is cutin + H2O = cutin monomers.. In terms of biological role, catalyzes the hydrolysis of complex carboxylic polyesters found in the cell wall of plants. Degrades cutin, a macromolecule that forms the structure of the plant cuticle. Allows pathogenic fungi to penetrate through the cuticular barrier into the host plant during the initial stage of fungal infection. This Pyrenopeziza brassicae protein is Cutinase pbc1.